Here is a 369-residue protein sequence, read N- to C-terminus: Probable trehalose-phosphate phosphatase D (369 aa).

A disordered region spans residues 63 to 85; it reads RASSPTRTRPGNISPLPESDEED.

This sequence belongs to the trehalose phosphatase family. The cofactor is a divalent metal cation.

It carries out the reaction alpha,alpha-trehalose 6-phosphate + H2O = alpha,alpha-trehalose + phosphate. The protein operates within glycan biosynthesis; trehalose biosynthesis. Its function is as follows. Removes the phosphate from trehalose 6-phosphate to produce free trehalose. Trehalose accumulation in plant may improve abiotic stress tolerance. The protein is Probable trehalose-phosphate phosphatase D (TPPD) of Arabidopsis thaliana (Mouse-ear cress).